Here is a 626-residue protein sequence, read N- to C-terminus: Endogenous retrovirus group S71 member 1 Env polyprotein (626 aa).

The signal sequence occupies residues 1 to 38; it reads MGPEAWVRPLKTAPKPGEAIRLILFIYLSCFFLPVMSS. Positions 39–438 are surface protein; it reads EPSYSFLLTS…PPELHPRLHQ (400 aa). Residues 39–575 lie on the Extracellular side of the membrane; the sequence is EPSYSFLLTS…FNWNPWLTTL (537 aa). Positions 302–305 match the CXXC motif; that stretch reads CWLC. The fusion peptide stretch occupies residues 439–459; sequence AVPLLVPLLAGLSIAGSAAIG. A transmembrane protein region spans residues 439–626; that stretch reads AVPLLVPLLA…KTQYDTLVNN (188 aa). Residues 503–519 carry the CKS-17 motif; the sequence is LQNCRCLDLLFLSQGGL. A disulfide bridge links C520 with C527. The short motif at 520–528 is the CX6CC element; the sequence is CAALGESCC. The chain crosses the membrane as a helical span at residues 576–596; sequence ITGLAGPLLILLLSLIFGPCI. The Cytoplasmic segment spans residues 597-626; the sequence is LNSFLNFIKQRIASVKLTYLKTQYDTLVNN.

Belongs to the gamma type-C retroviral envelope protein family. HERV class-I T env subfamily. In terms of processing, the CXXC motif is highly conserved across a broad range of retroviral envelope proteins. It is thought to participate in the formation of a labile disulfide bond possibly with the CX6CC motif present in the transmembrane domain. As to expression, expressed at higher level in thyroid. Expressed at lower level in adrenal, bone marrow, brain, breast, kidney, ovary, placenta, prostate, skin, testis and trachea.

Its subcellular location is the cell membrane. Functionally, retroviral envelope proteins mediate receptor recognition and membrane fusion during early infection. Endogenous envelope proteins may have kept, lost or modified their original function during evolution. This endogenous envelope protein has lost its original fusogenic properties. In Homo sapiens (Human), this protein is Endogenous retrovirus group S71 member 1 Env polyprotein (ERVS71-1).